The sequence spans 474 residues: Bifunctional protein GlmU (474 aa).

Residues Met1–Pro232 form a pyrophosphorylase region. UDP-N-acetyl-alpha-D-glucosamine contacts are provided by residues Lys23, Gln78, Gly83 to Thr84, Ser105 to Asp107, Gly142, Glu157, and Asn230. Asp107 is a Mg(2+) binding site. Mg(2+) is bound at residue Asn230. The segment at Leu233–Gln253 is linker. The tract at residues Gly254–Ala474 is N-acetyltransferase. Residues Arg349 and Lys367 each contribute to the UDP-N-acetyl-alpha-D-glucosamine site. The Proton acceptor role is filled by His379. UDP-N-acetyl-alpha-D-glucosamine is bound by residues Tyr382 and Asn393. Acetyl-CoA contacts are provided by residues Ala396, Asn402–Tyr403, Ser421, Gly439, and Arg456. Residues Val454–Ala474 are disordered.

It in the N-terminal section; belongs to the N-acetylglucosamine-1-phosphate uridyltransferase family. The protein in the C-terminal section; belongs to the transferase hexapeptide repeat family. As to quaternary structure, homotrimer. Mg(2+) is required as a cofactor.

It is found in the cytoplasm. The catalysed reaction is alpha-D-glucosamine 1-phosphate + acetyl-CoA = N-acetyl-alpha-D-glucosamine 1-phosphate + CoA + H(+). It carries out the reaction N-acetyl-alpha-D-glucosamine 1-phosphate + UTP + H(+) = UDP-N-acetyl-alpha-D-glucosamine + diphosphate. The protein operates within nucleotide-sugar biosynthesis; UDP-N-acetyl-alpha-D-glucosamine biosynthesis; N-acetyl-alpha-D-glucosamine 1-phosphate from alpha-D-glucosamine 6-phosphate (route II): step 2/2. It functions in the pathway nucleotide-sugar biosynthesis; UDP-N-acetyl-alpha-D-glucosamine biosynthesis; UDP-N-acetyl-alpha-D-glucosamine from N-acetyl-alpha-D-glucosamine 1-phosphate: step 1/1. It participates in bacterial outer membrane biogenesis; LPS lipid A biosynthesis. Catalyzes the last two sequential reactions in the de novo biosynthetic pathway for UDP-N-acetylglucosamine (UDP-GlcNAc). The C-terminal domain catalyzes the transfer of acetyl group from acetyl coenzyme A to glucosamine-1-phosphate (GlcN-1-P) to produce N-acetylglucosamine-1-phosphate (GlcNAc-1-P), which is converted into UDP-GlcNAc by the transfer of uridine 5-monophosphate (from uridine 5-triphosphate), a reaction catalyzed by the N-terminal domain. This is Bifunctional protein GlmU from Paracidovorax citrulli (strain AAC00-1) (Acidovorax citrulli).